Reading from the N-terminus, the 597-residue chain is Probable translation initiation factor IF-2 (597 aa).

In terms of domain architecture, tr-type G spans isoleucine 4–leucine 221. The G1 stretch occupies residues glycine 13 to threonine 20. Position 13–20 (glycine 13–threonine 20) interacts with GTP. A G2 region spans residues glycine 38–histidine 42. A G3 region spans residues aspartate 77 to glycine 80. Residues aspartate 77–histidine 81 and asparagine 131–aspartate 134 each bind GTP. The tract at residues asparagine 131–aspartate 134 is G4. The interval serine 199 to lysine 201 is G5.

This sequence belongs to the TRAFAC class translation factor GTPase superfamily. Classic translation factor GTPase family. IF-2 subfamily.

Its function is as follows. Function in general translation initiation by promoting the binding of the formylmethionine-tRNA to ribosomes. Seems to function along with eIF-2. This Thermococcus sibiricus (strain DSM 12597 / MM 739) protein is Probable translation initiation factor IF-2.